Here is a 488-residue protein sequence, read N- to C-terminus: uncharacterized protein (488 aa).

12 helical membrane-spanning segments follow: residues F2–V22, V27–S47, F59–V79, L106–L126, I176–L196, L241–V261, I275–Y295, V314–L334, I347–F367, I368–A388, V438–F458, and D461–I481.

It belongs to the GntP permease family.

The protein resides in the cell inner membrane. This is an uncharacterized protein from Haemophilus influenzae (strain ATCC 51907 / DSM 11121 / KW20 / Rd).